Reading from the N-terminus, the 537-residue chain is Glucose-6-phosphate isomerase (537 aa).

Glutamate 341 serves as the catalytic Proton donor. Active-site residues include histidine 372 and lysine 501.

The protein belongs to the GPI family.

The protein localises to the cytoplasm. It catalyses the reaction alpha-D-glucose 6-phosphate = beta-D-fructose 6-phosphate. Its pathway is carbohydrate biosynthesis; gluconeogenesis. It functions in the pathway carbohydrate degradation; glycolysis; D-glyceraldehyde 3-phosphate and glycerone phosphate from D-glucose: step 2/4. Catalyzes the reversible isomerization of glucose-6-phosphate to fructose-6-phosphate. In Jannaschia sp. (strain CCS1), this protein is Glucose-6-phosphate isomerase.